Consider the following 289-residue polypeptide: ATP synthase gamma chain (289 aa).

The protein belongs to the ATPase gamma chain family. As to quaternary structure, F-type ATPases have 2 components, CF(1) - the catalytic core - and CF(0) - the membrane proton channel. CF(1) has five subunits: alpha(3), beta(3), gamma(1), delta(1), epsilon(1). CF(0) has three main subunits: a, b and c.

It is found in the cell membrane. Functionally, produces ATP from ADP in the presence of a proton gradient across the membrane. The gamma chain is believed to be important in regulating ATPase activity and the flow of protons through the CF(0) complex. This Mycoplasmopsis synoviae (strain 53) (Mycoplasma synoviae) protein is ATP synthase gamma chain.